We begin with the raw amino-acid sequence, 522 residues long: Glutamate--cysteine ligase, chloroplastic (522 aa).

Disulfide bonds link Cys-186–Cys-406 and Cys-349–Cys-364.

Belongs to the carboxylate-amine ligase family. Glutamate--cysteine ligase type 2 subfamily. As to quaternary structure, homodimer or monomer when oxidized or reduced, respectively. The Cys-186-Cys-406 disulfide bridge is known to modulate the enzyme activity according to the redox status. The oxidized form constitutes the active enzyme. In terms of tissue distribution, abundant in leaves and roots. Expressed to a high level in leaf trichomes of mature plant.

The protein localises to the plastid. The protein resides in the chloroplast. The enzyme catalyses L-cysteine + L-glutamate + ATP = gamma-L-glutamyl-L-cysteine + ADP + phosphate + H(+). The protein operates within sulfur metabolism; glutathione biosynthesis; glutathione from L-cysteine and L-glutamate: step 1/2. Feedback inhibition by glutathione. Inhibited by buthionine sulfoximine and cystamine. Seems to play an important role in controlling the expression of resistance responses like the regulation of salicylic acid (SA) and phytoalexin (camalexin) production. Involved in resistance to fungal and bacterial pathogens. Required for the regulation of cell proliferation in root apical meristems through the GSH-dependent developmental pathway. Also participates in the detoxification process, the antioxidant response and is essential for embryo development and proper seed maturation. The chain is Glutamate--cysteine ligase, chloroplastic (GSH1) from Arabidopsis thaliana (Mouse-ear cress).